A 210-amino-acid chain; its full sequence is Small ribosomal subunit protein eS8y (210 aa).

The segment at 1-22 (MGISRDSIHKRRATGGKQKMWR) is disordered. The span at 8-22 (IHKRRATGGKQKMWR) shows a compositional bias: basic residues.

Belongs to the eukaryotic ribosomal protein eS8 family.

The sequence is that of Small ribosomal subunit protein eS8y (RPS8B) from Arabidopsis thaliana (Mouse-ear cress).